Reading from the N-terminus, the 982-residue chain is Polyribonucleotide nucleotidyltransferase 2, mitochondrial (982 aa).

The transit peptide at 1-39 (MSMAVASLRLLARGGRRRARFPAPLSVPGGRAAFLSGAA) directs the protein to the mitochondrion. The KH domain maps to 624–678 (PRLATLSFSSDSLRKLLFHRKKIEQETGARVSVSDGTVTIVAKTQPIMDKAIEKV). The region spanning 689 to 757 (GRTYKGVVSS…LRGNIKLSLK (69 aa)) is the S1 motif 1 domain. Disordered stretches follow at residues 792 to 814 (PSKD…EETP) and 832 to 892 (QDVT…NDVL). Composition is skewed to low complexity over residues 846–855 (AKSSPKLSKP) and 868–877 (KKTSGASTTA). The S1 motif 2 domain occupies 920-982 (GDVVTAKVYQ…KGIPVFSLLD (63 aa)).

This sequence belongs to the polyribonucleotide nucleotidyltransferase family.

Its subcellular location is the mitochondrion. It carries out the reaction RNA(n+1) + phosphate = RNA(n) + a ribonucleoside 5'-diphosphate. Functionally, involved in the 3'-end maturation of mitochondrial mRNAs, rRNAs and tRNAs. Functions as a poly(A) mRNA 3'-5' degrading phosphorylase. The chain is Polyribonucleotide nucleotidyltransferase 2, mitochondrial (PNP2) from Oryza sativa subsp. japonica (Rice).